We begin with the raw amino-acid sequence, 221 residues long: MGQKVNPIGLRVGVIRTWDSRWYAKGQQYYENLHEDIRLRKFLKDKLKNAGVAKIEMERAAKKIKIIISTARPGVVIGKKGSGIDALKAEVQKLTPNEVFLSIQEVRKPDLDAQLVAESIAQQLEKRISWRRALKKSIAAAIKGGVRGIKIRVSGRLDGAEIARSEWYNEKSVPLHTLRADIDYGTAESLTAYGIIGLKVWIYKGDILSAREVEEAGRVKS.

Residues 39 to 107 (LRKFLKDKLK…EVFLSIQEVR (69 aa)) form the KH type-2 domain.

Belongs to the universal ribosomal protein uS3 family. As to quaternary structure, part of the 30S ribosomal subunit. Forms a tight complex with proteins S10 and S14.

Binds the lower part of the 30S subunit head. Binds mRNA in the 70S ribosome, positioning it for translation. In Bdellovibrio bacteriovorus (strain ATCC 15356 / DSM 50701 / NCIMB 9529 / HD100), this protein is Small ribosomal subunit protein uS3.